The following is an 89-amino-acid chain: Small ribosomal subunit protein uS17 (89 aa).

Belongs to the universal ribosomal protein uS17 family. Part of the 30S ribosomal subunit.

One of the primary rRNA binding proteins, it binds specifically to the 5'-end of 16S ribosomal RNA. This Xanthomonas axonopodis pv. citri (strain 306) protein is Small ribosomal subunit protein uS17.